The primary structure comprises 407 residues: Na(+)-translocating NADH-quinone reductase subunit F (407 aa).

The helical transmembrane segment at 6–26 threads the bilayer; that stretch reads IFLAIGMFTAIVLGLVAIILV. The 2Fe-2S ferredoxin-type domain occupies 35 to 127; that stretch reads GDVTIQINGE…DMQIRVPEEV (93 aa). 4 residues coordinate [2Fe-2S] cluster: cysteine 70, cysteine 76, cysteine 79, and cysteine 111. Residues 130–269 enclose the FAD-binding FR-type domain; that stretch reads VKKWECTVES…YGPFGEFFAK (140 aa). Residues 272 to 389 are catalytic; that stretch reads EAEMVFIGGG…PMMNAAVIKM (118 aa).

This sequence belongs to the NqrF family. In terms of assembly, composed of six subunits; NqrA, NqrB, NqrC, NqrD, NqrE and NqrF. The cofactor is [2Fe-2S] cluster. It depends on FAD as a cofactor.

It localises to the cell inner membrane. It catalyses the reaction a ubiquinone + n Na(+)(in) + NADH + H(+) = a ubiquinol + n Na(+)(out) + NAD(+). NQR complex catalyzes the reduction of ubiquinone-1 to ubiquinol by two successive reactions, coupled with the transport of Na(+) ions from the cytoplasm to the periplasm. The first step is catalyzed by NqrF, which accepts electrons from NADH and reduces ubiquinone-1 to ubisemiquinone by a one-electron transfer pathway. In Pseudomonas aeruginosa (strain ATCC 15692 / DSM 22644 / CIP 104116 / JCM 14847 / LMG 12228 / 1C / PRS 101 / PAO1), this protein is Na(+)-translocating NADH-quinone reductase subunit F.